The primary structure comprises 286 residues: Polyamine aminopropyltransferase (286 aa).

One can recognise a PABS domain in the interval 6 to 239; the sequence is PVWIDEVFED…GWWSWLYASD (234 aa). Position 34 (Gln-34) interacts with S-methyl-5'-thioadenosine. 2 residues coordinate spermidine: His-65 and Asp-89. S-methyl-5'-thioadenosine is bound by residues Glu-109 and 140 to 141; that span reads DG. The active-site Proton acceptor is Asp-159. 159-162 contacts spermidine; that stretch reads DGSD. Pro-166 is a binding site for S-methyl-5'-thioadenosine.

Belongs to the spermidine/spermine synthase family. In terms of assembly, homodimer or homotetramer. Homodimer.

It localises to the cytoplasm. It carries out the reaction S-adenosyl 3-(methylsulfanyl)propylamine + putrescine = S-methyl-5'-thioadenosine + spermidine + H(+). It functions in the pathway amine and polyamine biosynthesis; spermidine biosynthesis; spermidine from putrescine: step 1/1. Catalyzes the irreversible transfer of a propylamine group from the amino donor S-adenosylmethioninamine (decarboxy-AdoMet) to putrescine (1,4-diaminobutane) to yield spermidine. The chain is Polyamine aminopropyltransferase from Synechococcus elongatus (strain ATCC 33912 / PCC 7942 / FACHB-805) (Anacystis nidulans R2).